The chain runs to 161 residues: uncharacterized protein (161 aa).

Positions 126 to 161 (TPSNCGESSTSSGQSSGDESNCSLRTHGVYTRGEQH) are disordered. Residues 128 to 148 (SNCGESSTSSGQSSGDESNCS) show a composition bias toward low complexity.

Belongs to the herpesviridae US1 family.

This is an uncharacterized protein from Human cytomegalovirus (strain AD169) (HHV-5).